The primary structure comprises 516 residues: RxLR effector protein PITG_15127 (516 aa).

Positions 1-22 (MRLYSGAILCTIATLLISVSTA) are cleaved as a signal peptide. The RxLR-dEER signature appears at 48-63 (RFLRVSTQNTENGENR).

This sequence belongs to the RxLR effector family.

The protein localises to the secreted. It is found in the host cell membrane. Its subcellular location is the host nucleus. The protein resides in the host cytoplasm. Functionally, effector that enhances P.infestans colonization of Nicotiana benthamiana leaves. The protein is RxLR effector protein PITG_15127 of Phytophthora infestans (strain T30-4) (Potato late blight agent).